Reading from the N-terminus, the 707-residue chain is U-box domain-containing protein 2 (707 aa).

In terms of domain architecture, U-box spans 239–313 (RVPSDFRCSL…ASWCETNNVY (75 aa)). ARM repeat units lie at residues 453–492 (TDNRIVIARCEAIPSLVSLLYSTDERIQADAVTCLLNLSI), 494–534 (DNNK…SLSV), 536–575 (EEYKTEIGEAGAIEPLVDLLGSGSLSGKKDAATALFNLSI), 577–615 (HENKTKVIEAGAVRYLVELMDPAFGMVEKAVVVLANLAT), and 617–656 (REGKIAIGEEGGIPVLVEVVELGSARGKENATAALLQLCT).

It catalyses the reaction S-ubiquitinyl-[E2 ubiquitin-conjugating enzyme]-L-cysteine + [acceptor protein]-L-lysine = [E2 ubiquitin-conjugating enzyme]-L-cysteine + N(6)-ubiquitinyl-[acceptor protein]-L-lysine.. It participates in protein modification; protein ubiquitination. In terms of biological role, functions as an E3 ubiquitin ligase. The sequence is that of U-box domain-containing protein 2 (PUB2) from Arabidopsis thaliana (Mouse-ear cress).